The chain runs to 318 residues: Nucleotide-binding protein Lcho_3490 (318 aa).

Residue 35-42 (GISGGGKS) coordinates ATP. Residue 84–87 (DVRN) participates in GTP binding.

It belongs to the RapZ-like family.

In terms of biological role, displays ATPase and GTPase activities. In Leptothrix cholodnii (strain ATCC 51168 / LMG 8142 / SP-6) (Leptothrix discophora (strain SP-6)), this protein is Nucleotide-binding protein Lcho_3490.